Consider the following 349-residue polypeptide: Phosphoribosylformylglycinamidine cyclo-ligase (349 aa).

This sequence belongs to the AIR synthase family.

It localises to the cytoplasm. The catalysed reaction is 2-formamido-N(1)-(5-O-phospho-beta-D-ribosyl)acetamidine + ATP = 5-amino-1-(5-phospho-beta-D-ribosyl)imidazole + ADP + phosphate + H(+). Its pathway is purine metabolism; IMP biosynthesis via de novo pathway; 5-amino-1-(5-phospho-D-ribosyl)imidazole from N(2)-formyl-N(1)-(5-phospho-D-ribosyl)glycinamide: step 2/2. This is Phosphoribosylformylglycinamidine cyclo-ligase from Lawsonia intracellularis (strain PHE/MN1-00).